The following is a 160-amino-acid chain: Small ribosomal subunit protein bS6 (160 aa).

Positions 100 to 160 (PSSVLARKSD…DDARETAGAE (61 aa)) are disordered. 2 stretches are compositionally biased toward basic and acidic residues: residues 106–116 (RKSDDRGDRGN) and 136–160 (RSSE…AGAE).

This sequence belongs to the bacterial ribosomal protein bS6 family.

Its function is as follows. Binds together with bS18 to 16S ribosomal RNA. This is Small ribosomal subunit protein bS6 from Gluconobacter oxydans (strain 621H) (Gluconobacter suboxydans).